The chain runs to 856 residues: Serine/threonine-protein phosphatase 6 regulatory subunit 1 (856 aa).

Positions 10-403 (SSHLDTLLEK…VFNNFLHAQV (394 aa)) are interaction with PPP6C. Ser-232 carries the phosphoserine modification. Thr-524 is modified (phosphothreonine). Residues Ser-529, Ser-530, and Ser-531 each carry the phosphoserine modification. The span at 621–630 (DDEEEEEEEG) shows a compositional bias: acidic residues. 2 disordered regions span residues 621-770 (DDEE…KVAE) and 792-856 (RSAP…SGSQ). Residues Ser-633 and Ser-636 each carry the phosphoserine modification. Polar residues predominate over residues 644 to 656 (QGSQPVRASQASQ). Residues 667–683 (DSEEEDEEEDEEEDEGA) are compositionally biased toward acidic residues. A phosphoserine mark is found at Ser-698 and Ser-739. The segment covering 794 to 809 (APSSLDSATRDPSTSV) has biased composition (polar residues). Ser-826 bears the Phosphoserine mark. Residues 842–856 (PNGSTPGGPISSGSQ) are compositionally biased toward low complexity.

This sequence belongs to the SAPS family. Protein phosphatase 6 (PP6) holoenzyme is proposed to be a heterotrimeric complex formed of the catalytic subunit, a SAPS domain-containing subunit (PP6R) and an ankyrin repeat-domain containing regulatory subunit (ARS). Interacts with PPP6C and NFKBIE. Interacts with ANKRD28, ANKRD44 and ANKRD52. In terms of tissue distribution, ubiquitous with highest expression in lung, spleen and bladder.

The protein localises to the cytoplasm. Its function is as follows. Regulatory subunit of protein phosphatase 6 (PP6). May function as a scaffolding PP6 subunit. Involved in the PP6-mediated dephosphorylation of NFKBIE opposing its degradation in response to TNF-alpha. This Mus musculus (Mouse) protein is Serine/threonine-protein phosphatase 6 regulatory subunit 1 (Ppp6r1).